The sequence spans 439 residues: Xylose isomerase (439 aa).

Catalysis depends on residues H101 and D104. Residues E232, E268, H271, D296, D307, D309, and D339 each contribute to the Mg(2+) site.

It belongs to the xylose isomerase family. Homotetramer. The cofactor is Mg(2+).

Its subcellular location is the cytoplasm. It catalyses the reaction alpha-D-xylose = alpha-D-xylulofuranose. This is Xylose isomerase from Haemophilus influenzae (strain 86-028NP).